Here is a 549-residue protein sequence, read N- to C-terminus: MPTGCEFPMIKTFENALTAADFESTVELTNFPAVFRGCASVWDAYSKWNPFNSGLDYLEERAGSVEVEAMLSRTAPVFNGDIRSHERVSLPFSDFIRFCKQHMRGKGNGSGVDAKSADLNPMCEDYRPGQIYLAQFPILNDEKEEKVLLKILRQDIQTPTFLDAKSLSSINFWMNSAEARSSTHYDPHHNLLCVVSGRKKVVLWPPSASPSLYPMPIYGEASNHSSVGLENPNLSDYPRAEHSLKQSQEITLNAGDAVFIPEGWFHQVDSDELTVAVNFWWQSNYMSNMPEHMDSYYLRRITRSLLVSKPSSTDLRHLSEHIDQSRIEMAEGGNDNIGNESIKKGLSTLHEKASLHDLDPSASQALHDLISLVHDHVNAVDTSKGLQHTSPSCSEGGEKSKFLVNAMSCLEDDRVAHLLWNLEASRLRDVLLAMALELSYLKLLVKMEIFVLVLHKIFETLEALILHMLSPIAAEVLTQKFDEIDQQTGEEDRTQFFREFYSAFDDEAAAMDIILSRKEAFAFQVCSLASLCRLRTYHKLKGEKFSASY.

A JmjC domain is found at 125–296; sequence DYRPGQIYLA…SNMPEHMDSY (172 aa). Residues His-184, Asp-186, and His-266 each coordinate Fe cation.

This sequence belongs to the JARID1 histone demethylase family. Requires Fe(2+) as cofactor. Mostly expressed in leaves and inflorescences, and, to a lower extent, in roots, siliques and stems.

The protein localises to the nucleus. Functionally, may function as histone H3 lysine demethylase and be involved in regulation of gene expression. This is Lysine-specific demethylase JMJ31 from Arabidopsis thaliana (Mouse-ear cress).